The following is a 434-amino-acid chain: DNA primase large subunit PriL (434 aa).

4 residues coordinate [4Fe-4S] cluster: Cys281, Cys392, Cys403, and Cys409.

This sequence belongs to the eukaryotic-type primase large subunit family. In terms of assembly, heterodimer of a small subunit (PriS) and a large subunit (PriL). The cofactor is [4Fe-4S] cluster.

Its function is as follows. Regulatory subunit of DNA primase, an RNA polymerase that catalyzes the synthesis of short RNA molecules used as primers for DNA polymerase during DNA replication. Stabilizes and modulates the activity of the small subunit, increasing the rate of DNA synthesis, and conferring RNA synthesis capability. The DNA polymerase activity may enable DNA primase to also catalyze primer extension after primer synthesis. May also play a role in DNA repair. This is DNA primase large subunit PriL from Methanothermobacter thermautotrophicus (strain ATCC 29096 / DSM 1053 / JCM 10044 / NBRC 100330 / Delta H) (Methanobacterium thermoautotrophicum).